A 391-amino-acid chain; its full sequence is Chalcone synthase (391 aa).

Cys164 is an active-site residue.

This sequence belongs to the thiolase-like superfamily. Chalcone/stilbene synthases family.

It catalyses the reaction (E)-4-coumaroyl-CoA + 3 malonyl-CoA + 3 H(+) = 2',4,4',6'-tetrahydroxychalcone + 3 CO2 + 4 CoA. The protein operates within secondary metabolite biosynthesis; flavonoid biosynthesis. The primary product of this enzyme is 4,2',4',6'-tetrahydroxychalcone (also termed naringenin-chalcone or chalcone) which can under specific conditions spontaneously isomerize into naringenin. In Dianthus caryophyllus (Carnation), this protein is Chalcone synthase (CHS).